We begin with the raw amino-acid sequence, 904 residues long: E3 ubiquitin-protein ligase HACE1 (904 aa).

7 ANK repeats span residues 34–63 (AVYT…DVNY), 68–97 (VKRS…NPNY), 101–130 (SGCT…DVNI), 134–163 (EGLT…NVDV), 167–196 (MGQT…DINR), 200–230 (SGAT…YLPD), and 232–261 (NGVT…RLFQ). One can recognise an HECT domain in the interval 569–904 (SNEKLKQGIA…HCGSYGYTMA (336 aa)). The active-site Glycyl thioester intermediate is cysteine 871.

Its subcellular location is the golgi apparatus. It is found in the golgi stack membrane. It localises to the cytoplasm. The protein localises to the endoplasmic reticulum. It carries out the reaction S-ubiquitinyl-[E2 ubiquitin-conjugating enzyme]-L-cysteine + [acceptor protein]-L-lysine = [E2 ubiquitin-conjugating enzyme]-L-cysteine + N(6)-ubiquitinyl-[acceptor protein]-L-lysine.. It participates in protein modification; protein ubiquitination. In terms of biological role, E3 ubiquitin-protein ligase involved in Golgi membrane fusion and regulation of small GTPases. Acts as a regulator of Golgi membrane dynamics during the cell cycle: recruited to Golgi membrane by Rab proteins and regulates postmitotic Golgi membrane fusion. Acts by mediating ubiquitination during mitotic Golgi disassembly, ubiquitination serving as a signal for Golgi reassembly later, after cell division. The protein is E3 ubiquitin-protein ligase HACE1 (hace1) of Danio rerio (Zebrafish).